We begin with the raw amino-acid sequence, 518 residues long: Probable carboxypeptidase 2 (518 aa).

Positions 1-21 (MVAYHLLTLISLGLGSHCASA) are cleaved as a signal peptide. A glycan (N-linked (GlcNAc...) asparagine) is linked at Asn46. A disordered region spans residues 53 to 76 (PAFTSPGTVPRGFSDGTSGPTRDE). The Peptidase M14 domain occupies 71–351 (GPTRDETMEG…VMAKSILQTA (281 aa)). Asn116 is a glycosylation site (N-linked (GlcNAc...) asparagine). 3 residues coordinate Zn(2+): His136, Glu139, and His224. Catalysis depends on Glu322, which acts as the Proton donor/acceptor. N-linked (GlcNAc...) asparagine glycosylation is found at Asn393 and Asn459.

Belongs to the peptidase M14 family. Zn(2+) is required as a cofactor.

It is found in the secreted. Functionally, extracellular metalloprotease that contributes to pathogenicity. In Trichophyton verrucosum (strain HKI 0517), this protein is Probable carboxypeptidase 2 (MCPB).